Here is a 128-residue protein sequence, read N- to C-terminus: Cytochrome c-type biogenesis protein CcmE (128 aa).

The Cytoplasmic portion of the chain corresponds to 1-8; it reads MQKIVRNR. A helical; Signal-anchor for type II membrane protein membrane pass occupies residues 9-29; the sequence is LIKIILCFCSTCLGISIILYN. The Periplasmic segment spans residues 30-128; the sequence is LEKNIIFFFP…KHDENYRPPS (99 aa). 2 residues coordinate heme: histidine 120 and tyrosine 124.

The protein belongs to the CcmE/CycJ family.

It is found in the cell inner membrane. Its function is as follows. Heme chaperone required for the biogenesis of c-type cytochromes. Transiently binds heme delivered by CcmC and transfers the heme to apo-cytochromes in a process facilitated by CcmF and CcmH. In Rickettsia typhi (strain ATCC VR-144 / Wilmington), this protein is Cytochrome c-type biogenesis protein CcmE.